A 211-amino-acid chain; its full sequence is Ribosomal RNA small subunit methyltransferase G (211 aa).

S-adenosyl-L-methionine-binding positions include G79, L84, V130–E131, and R145.

It belongs to the methyltransferase superfamily. RNA methyltransferase RsmG family.

It localises to the cytoplasm. It catalyses the reaction guanosine(527) in 16S rRNA + S-adenosyl-L-methionine = N(7)-methylguanosine(527) in 16S rRNA + S-adenosyl-L-homocysteine. Functionally, specifically methylates the N7 position of guanine in position 527 of 16S rRNA. The protein is Ribosomal RNA small subunit methyltransferase G of Alteromonas mediterranea (strain DSM 17117 / CIP 110805 / LMG 28347 / Deep ecotype).